The sequence spans 637 residues: Transmembrane 9 superfamily member 10 (637 aa).

Positions M1–G23 are cleaved as a signal peptide. Residues F24–H274 are Lumenal-facing. A helical transmembrane segment spans residues W275–I295. Over M296 to G344 the chain is Cytoplasmic. The chain crosses the membrane as a helical span at residues T345–L365. Residues S366–R370 are Lumenal-facing. A helical transmembrane segment spans residues G371–A391. Topologically, residues S392–T411 are cytoplasmic. A helical transmembrane segment spans residues A412 to G432. Over Q433–M444 the chain is Lumenal. Residues F445–I465 form a helical membrane-spanning segment. At G466–P494 the chain is on the cytoplasmic side. The helical transmembrane segment at I495 to F515 threads the bilayer. The Lumenal portion of the chain corresponds to I516 to Y527. A helical transmembrane segment spans residues I528–V548. Over V549–S566 the chain is Cytoplasmic. Residues Y567–T587 form a helical membrane-spanning segment. Residues K588–K593 are Lumenal-facing. The chain crosses the membrane as a helical span at residues L594–F614. The Cytoplasmic portion of the chain corresponds to T615 to D637. Positions F626 to Y631 match the Endoplasmic reticulum export signal motif. The Golgi retention signal signature appears at K635–D637.

It belongs to the nonaspanin (TM9SF) (TC 9.A.2) family.

It localises to the endosome membrane. It is found in the golgi apparatus membrane. The polypeptide is Transmembrane 9 superfamily member 10 (Arabidopsis thaliana (Mouse-ear cress)).